The primary structure comprises 189 residues: Elongation factor P (189 aa).

This sequence belongs to the elongation factor P family.

Its subcellular location is the cytoplasm. It functions in the pathway protein biosynthesis; polypeptide chain elongation. Functionally, involved in peptide bond synthesis. Stimulates efficient translation and peptide-bond synthesis on native or reconstituted 70S ribosomes in vitro. Probably functions indirectly by altering the affinity of the ribosome for aminoacyl-tRNA, thus increasing their reactivity as acceptors for peptidyl transferase. The polypeptide is Elongation factor P (Pseudomonas syringae pv. tomato (strain ATCC BAA-871 / DC3000)).